An 80-amino-acid chain; its full sequence is Small ribosomal subunit protein uS17 (80 aa).

This sequence belongs to the universal ribosomal protein uS17 family. As to quaternary structure, part of the 30S ribosomal subunit.

In terms of biological role, one of the primary rRNA binding proteins, it binds specifically to the 5'-end of 16S ribosomal RNA. In Brucella anthropi (strain ATCC 49188 / DSM 6882 / CCUG 24695 / JCM 21032 / LMG 3331 / NBRC 15819 / NCTC 12168 / Alc 37) (Ochrobactrum anthropi), this protein is Small ribosomal subunit protein uS17.